Reading from the N-terminus, the 145-residue chain is Leghemoglobin-2 (145 aa).

The region spanning 3–145 (AFSDKQEGLV…ELAAAIKKAY (143 aa)) is the Globin domain. Tyr-26 and Tyr-31 each carry nitrated tyrosine. Position 46 (Ser-46) interacts with heme b. Ser-46 bears the Phosphoserine mark. Residue His-62 participates in O2 binding. Residues Lys-65, His-93, and Lys-96 each coordinate heme b. Tyr-134 carries the nitrated tyrosine modification.

Belongs to the plant globin family. Monomer. In terms of processing, nitrated in effective nodules and particularly in hypoxic conditions; this mechanism may play a protective role in the symbiosis by buffering toxic peroxynitrite NO(2)(-). Nitration level decrease during nodule senescence. Phosphorylation at Ser-46 disrupts the molecular environment of its porphyrin ring oxygen binding pocket, thus leading to a reduced oxygen consumption and to the delivery of oxygen O(2) to symbiosomes. Root nodules.

The protein resides in the cytoplasm. The protein localises to the cytosol. Its subcellular location is the nucleus. In terms of biological role, leghemoglobin that reversibly binds oxygen O(2) through a pentacoordinated heme iron. In root nodules, facilitates the diffusion of oxygen to the bacteroids while preventing the bacterial nitrogenase from being inactivated by buffering dioxygen, nitric oxide and carbon monoxide, and promoting the formation of reactive oxygen species (ROS, e.g. H(2)O(2)). This role is essential for symbiotic nitrogen fixation (SNF). The protein is Leghemoglobin-2 of Vigna unguiculata (Cowpea).